We begin with the raw amino-acid sequence, 612 residues long: MAYEPRGDHGGGGGGQGQDGAFVKVRGRRPVTDYGATITHWQHDRAPGYKGGYTGEAERPSASYIVDMLPPAARVTKAADSIPIKHLHSSLNKIKHPINVVRWTPEGRRLLTASTSGEFTLWNGTGFNFETIMQAHDSAIRALEYSHSDDWLISADHDGAVKYWQPNFNNVQSINAHTDPIRDLAFSPSDSKFVTASDDSTLKIFDFALGQMESKLEGHGWDAKSVDWHPTKGLLVSGSKDHLVKLWDPRTSRCLTTLHGHKSTITKVLFEKVRGACLATSARDQTARVFDLRMMRDICLLKGHEKDISTLTWHPVHPNLLSTGGMDGSLFHYLLDSPNPPPGQSFTVAPYDSPDPTTVPAQSVWPTHKVPYAHDYAIWSLDWHPLGHILASGSNDRITRFWSRARPGDAEVFQDRYHIGEAAAEAQGTWDRRGGRRQRQEEEQQEMEDEMDALVDQDAPKAGVPGLPGIPGLPLGGLPGLGSAVPPPPIPGVGAGGPPPPLPFPLPGLNGSLPPPPLPGLDPNNPPDPAQLLELMKKAGVPLPPPGALPPGLLPPGGIPPPPGGFGMPIPPPPMSALEAEKAENVRRRAPLPSQEDSLRHEQRQGKYTRAR.

The segment at 1–21 is disordered; sequence MAYEPRGDHGGGGGGQGQDGA. WD repeat units follow at residues 93–132, 135–175, 177–215, 218–257, 260–300, 303–345, and 373–412; these read KIKH…FETI, AHDS…QSIN, HTDP…MESK, GHGW…CLTT, GHKS…DICL, GHEK…PGQS, and AHDY…DAEV. 3 disordered regions span residues 424–450, 486–514, and 544–612; these read AEAQ…MEDE, PPPP…GSLP, and PPPG…TRAR. Residues 430-442 are compositionally biased toward basic and acidic residues; the sequence is WDRRGGRRQRQEE. 2 stretches are compositionally biased toward pro residues: residues 486 to 506 and 544 to 575; these read PPPP…PFPL and PPPG…PPPM.

Its subcellular location is the nucleus. In terms of biological role, required for 3'-end cleavage and polyadenylation of pre-mRNAs. Also involved in chromosome segregation where it has a role in chromosome attachment to the mitotic spindle. The sequence is that of Polyadenylation factor subunit 2 (PFS2) from Gibberella zeae (strain ATCC MYA-4620 / CBS 123657 / FGSC 9075 / NRRL 31084 / PH-1) (Wheat head blight fungus).